The sequence spans 554 residues: Glutamine--tRNA ligase (554 aa).

A 'HIGH' region motif is present at residues 34 to 44 (PEPNGYLHIGH). ATP is bound by residues 35-37 (EPN) and 41-47 (HIGHAKS). 2 residues coordinate L-glutamine: aspartate 67 and tyrosine 212. Residues threonine 231, 261–262 (RL), and 269–271 (MSK) each bind ATP. Positions 268–272 (IMSKR) match the 'KMSKS' region motif.

The protein belongs to the class-I aminoacyl-tRNA synthetase family. Monomer.

It is found in the cytoplasm. It carries out the reaction tRNA(Gln) + L-glutamine + ATP = L-glutaminyl-tRNA(Gln) + AMP + diphosphate. This Serratia proteamaculans (strain 568) protein is Glutamine--tRNA ligase.